The chain runs to 305 residues: MLGLPERRLPSAEFLLLLPFLLLLLLLLPAAPAPHRAAYKPVIVVHGLFDSSYSFRHLLEYINETHPGTAVTVLDLFDGRESLRPLWEQVQGFREAVAPIMAKALQGVHLICYSQGGLVCRALLSVMDEHNVDSFISLSSPQMGQYGDTNYLKWLFPTSMRSNLYRICYSPWGQEFSICNYWHDPHHDDLYLNASSFLALINGERDHPNATAWRKNFLRLGRLVLIGGPDDGVITPWQSSFFGFYDANETVLEMEKQLVYLRDSFGLKTLLARGAIVRCPMAGISHTAWHSNRTLYETCIEPWLS.

Positions 1 to 32 are cleaved as a signal peptide; the sequence is MLGLPERRLPSAEFLLLLPFLLLLLLLLPAAP. 2 disulfides stabilise this stretch: cysteine 112–cysteine 120 and cysteine 168–cysteine 179. The Nucleophile role is filled by serine 114. N-linked (GlcNAc...) asparagine glycosylation is present at asparagine 193. Active-site residues include aspartate 231 and histidine 286. A disulfide bond links cysteine 279 and cysteine 299.

Belongs to the palmitoyl-protein thioesterase family.

It is found in the lysosome. The catalysed reaction is hexadecanoyl-CoA + H2O = hexadecanoate + CoA + H(+). The enzyme catalyses S-hexadecanoyl-N-acetylcysteamine + H2O = N-acetylcysteamine + hexadecanoate + H(+). Functionally, catalyzes the cleavage of thioester bonds from S-palmitoyl-CoA or S-palmitoyl-N-acetylcysteamine (unbranched structures) but does not have activity against palmitoylcysteine or palmitoylated proteins, branched structures or bulky head groups. Conversely, hydrolyzes both long and short chain fatty acyl-CoA substrate. In Bos taurus (Bovine), this protein is Lysosomal thioesterase PPT2 (PPT2).